Consider the following 345-residue polypeptide: Ribonucleoside-diphosphate reductase subunit beta (345 aa).

Residues D88, E118, and H121 each coordinate Fe cation. Residue Y125 is part of the active site. Residues E185, E219, and H222 each coordinate Fe cation.

It belongs to the ribonucleoside diphosphate reductase small chain family. In terms of assembly, tetramer of two alpha and two beta subunits. It depends on Fe cation as a cofactor.

The catalysed reaction is a 2'-deoxyribonucleoside 5'-diphosphate + [thioredoxin]-disulfide + H2O = a ribonucleoside 5'-diphosphate + [thioredoxin]-dithiol. Its function is as follows. Provides the precursors necessary for DNA synthesis. Catalyzes the biosynthesis of deoxyribonucleotides from the corresponding ribonucleotides. The chain is Ribonucleoside-diphosphate reductase subunit beta (nrdB) from Halalkalibacterium halodurans (strain ATCC BAA-125 / DSM 18197 / FERM 7344 / JCM 9153 / C-125) (Bacillus halodurans).